The primary structure comprises 180 residues: Trafficking protein particle complex subunit 3 (180 aa).

Cys68 carries the S-palmitoyl cysteine lipid modification.

This sequence belongs to the TRAPP small subunits family. BET3 subfamily. Homodimer. Part of the multisubunit TRAPP (transport protein particle) complex.

It is found in the golgi apparatus. The protein localises to the cis-Golgi network. The protein resides in the endoplasmic reticulum. May play a role in vesicular transport from endoplasmic reticulum to Golgi. The polypeptide is Trafficking protein particle complex subunit 3 (TRAPPC3) (Gallus gallus (Chicken)).